We begin with the raw amino-acid sequence, 457 residues long: MEGCTKDGAAVQSSGASTAGSIFWWLKDRSLGRGICVDPARDNFRTMTSLYSSIHPADSVNLSTRTHGAVFNLEYSPDGSVLTLACEQTEVLLFDPLSSKHIKTLSEAHEDCVNNIRFLDNRMFATCSDDTTIALWDLRKLNSKACTLHGHTSWVKNIEYDKNTRLLVTSGFDGNVIIWDTNRCTEDGCPHKKFFHTRFLMRMRLTPDCSKMLISTSSGYLLILHELDLTKSLEVGSYPILRARRTASTSDMTSTSSETRPSSSPCHNSDSGPLFEKHMSRSSQREGTSPRNSLEVLTPEVPGERDRGNCITSLQLHPKGWATLLRCSSNTDDQEWTCVYEFQEGTPVRQVSPRCSLRLTHYIEEANVGRGYIKELCFSPDGRMIASPHGYGIRLLGFDSQCKELVDCLPKEAGTLQEIRSLYSHKDVVLTTKFSPTHCQIASGCLSGRVSLYQPKF.

WD repeat units follow at residues 65–104, 108–146, 150–189, and 195–234; these read RTHG…HIKT, AHED…SKAC, GHTS…EDGC, and FHTR…KSLE. The segment covering 246-265 has biased composition (low complexity); it reads TASTSDMTSTSSETRPSSSP. The interval 246–304 is disordered; it reads TASTSDMTSTSSETRPSSSPCHNSDSGPLFEKHMSRSSQREGTSPRNSLEVLTPEVPGE. Positions 281 to 292 are enriched in polar residues; it reads RSSQREGTSPRN. WD repeat units follow at residues 306-346, 368-406, and 424-457; these read DRGN…QEGT, VGRG…KELV, and SHKD…QPKF.

This sequence belongs to the WD repeat DCAF10 family.

The protein operates within protein modification; protein ubiquitination. In terms of biological role, may function as a substrate receptor for CUL4-DDB1 E3 ubiquitin-protein ligase complex. In Xenopus laevis (African clawed frog), this protein is DDB1- and CUL4-associated factor 10 (dcaf10).